A 396-amino-acid polypeptide reads, in one-letter code: Endo-1,4-beta-xylanase A (396 aa).

The first 28 residues, 1–28 (MITLFRKPFVAGLAISLLVGGGIGNVAA), serve as a signal peptide directing secretion. Positions 51–396 (AWQVASLSER…VKPAYWRIID (346 aa)) constitute a GH10 domain. Glu-195 functions as the Proton donor in the catalytic mechanism. Residue Glu-301 is the Nucleophile of the active site.

This sequence belongs to the glycosyl hydrolase 10 (cellulase F) family.

The protein localises to the secreted. It catalyses the reaction Endohydrolysis of (1-&gt;4)-beta-D-xylosidic linkages in xylans.. It functions in the pathway glycan degradation; xylan degradation. In Halalkalibacterium halodurans (strain ATCC BAA-125 / DSM 18197 / FERM 7344 / JCM 9153 / C-125) (Bacillus halodurans), this protein is Endo-1,4-beta-xylanase A (xynA).